Reading from the N-terminus, the 201-residue chain is Translation machinery-associated protein 22 (201 aa).

Residues 94–165 enclose the SUI1 domain; sequence VTIKRIERNK…EARAYIEKLL (72 aa).

It belongs to the DENR family. As to quaternary structure, interacts with the 40S ribosomal subunit.

Its subcellular location is the cytoplasm. The sequence is that of Translation machinery-associated protein 22 (TMA22) from Meyerozyma guilliermondii (strain ATCC 6260 / CBS 566 / DSM 6381 / JCM 1539 / NBRC 10279 / NRRL Y-324) (Yeast).